Here is a 76-residue protein sequence, read N- to C-terminus: Large ribosomal subunit protein uL24 (76 aa).

It belongs to the universal ribosomal protein uL24 family. As to quaternary structure, part of the 50S ribosomal subunit.

Functionally, one of two assembly initiator proteins, it binds directly to the 5'-end of the 23S rRNA, where it nucleates assembly of the 50S subunit. In terms of biological role, one of the proteins that surrounds the polypeptide exit tunnel on the outside of the subunit. The chain is Large ribosomal subunit protein uL24 from Campylobacter hominis (strain ATCC BAA-381 / DSM 21671 / CCUG 45161 / LMG 19568 / NCTC 13146 / CH001A).